Here is a 341-residue protein sequence, read N- to C-terminus: L-threonine 3-dehydrogenase (341 aa).

Cys38 provides a ligand contact to Zn(2+). Residues Thr40 and His43 each act as charge relay system in the active site. Zn(2+)-binding residues include His63, Glu64, Cys93, Cys96, Cys99, and Cys107. NAD(+) contacts are provided by residues Ile175, Asp195, Arg200, 262–264, and 286–287; these read LGI and IY.

Belongs to the zinc-containing alcohol dehydrogenase family. In terms of assembly, homotetramer. It depends on Zn(2+) as a cofactor.

Its subcellular location is the cytoplasm. The catalysed reaction is L-threonine + NAD(+) = (2S)-2-amino-3-oxobutanoate + NADH + H(+). The protein operates within amino-acid degradation; L-threonine degradation via oxydo-reductase pathway; glycine from L-threonine: step 1/2. Its function is as follows. Catalyzes the NAD(+)-dependent oxidation of L-threonine to 2-amino-3-ketobutyrate. The sequence is that of L-threonine 3-dehydrogenase from Salmonella arizonae (strain ATCC BAA-731 / CDC346-86 / RSK2980).